The following is a 673-amino-acid chain: Glycine--tRNA ligase beta subunit (673 aa).

Belongs to the class-II aminoacyl-tRNA synthetase family. As to quaternary structure, tetramer of two alpha and two beta subunits.

The protein localises to the cytoplasm. The catalysed reaction is tRNA(Gly) + glycine + ATP = glycyl-tRNA(Gly) + AMP + diphosphate. This Lactococcus lactis subsp. cremoris (strain MG1363) protein is Glycine--tRNA ligase beta subunit.